A 637-amino-acid chain; its full sequence is Chaperone protein HtpG (637 aa).

Positions 1–330 are a; substrate-binding; sequence MATAPASHAF…TEDLPLNISR (330 aa). Residues 331 to 551 are b; it reads ETLQENVVVR…GGASTSSMDR (221 aa). The tract at residues 552 to 637 is c; sequence LLRVLHKDES…GDWYKAVRGL (86 aa).

Belongs to the heat shock protein 90 family. In terms of assembly, homodimer.

Its subcellular location is the cytoplasm. In terms of biological role, molecular chaperone. Has ATPase activity. This chain is Chaperone protein HtpG, found in Nitratidesulfovibrio vulgaris (strain ATCC 29579 / DSM 644 / CCUG 34227 / NCIMB 8303 / VKM B-1760 / Hildenborough) (Desulfovibrio vulgaris).